A 166-amino-acid chain; its full sequence is NAD(P)H-quinone oxidoreductase subunit I, chloroplastic (166 aa).

2 4Fe-4S ferredoxin-type domains span residues 55–84 (GRIHFEFDKCIACEVCVRVCPIDLPVVDWK) and 95–124 (LNYSIDFGICIFCGNCVEYCPTNCLSMTEE). Cysteine 64, cysteine 67, cysteine 70, cysteine 74, cysteine 104, cysteine 107, cysteine 110, and cysteine 114 together coordinate [4Fe-4S] cluster.

This sequence belongs to the complex I 23 kDa subunit family. In terms of assembly, NDH is composed of at least 16 different subunits, 5 of which are encoded in the nucleus. [4Fe-4S] cluster serves as cofactor.

Its subcellular location is the plastid. The protein localises to the chloroplast thylakoid membrane. It catalyses the reaction a plastoquinone + NADH + (n+1) H(+)(in) = a plastoquinol + NAD(+) + n H(+)(out). The catalysed reaction is a plastoquinone + NADPH + (n+1) H(+)(in) = a plastoquinol + NADP(+) + n H(+)(out). NDH shuttles electrons from NAD(P)H:plastoquinone, via FMN and iron-sulfur (Fe-S) centers, to quinones in the photosynthetic chain and possibly in a chloroplast respiratory chain. The immediate electron acceptor for the enzyme in this species is believed to be plastoquinone. Couples the redox reaction to proton translocation, and thus conserves the redox energy in a proton gradient. This is NAD(P)H-quinone oxidoreductase subunit I, chloroplastic from Marshallia caespitosa (Barbara's buttons).